Here is a 358-residue protein sequence, read N- to C-terminus: Trace amine-associated receptor 7b (358 aa).

Residues 1–47 (MATDDDRFPWDQDSILSRDLLSASSMQLCYEKLNRSCVRSPYSPGPR) lie on the Extracellular side of the membrane. N-linked (GlcNAc...) asparagine glycosylation occurs at asparagine 34. Cystine bridges form between cysteine 37/cysteine 201 and cysteine 120/cysteine 205. Residues 48–68 (LILYAVFGFGAVLAVCGNLLV) traverse the membrane as a helical segment. Over 69–83 (MTSILHFRQLHSPAN) the chain is Cytoplasmic. A helical transmembrane segment spans residues 84 to 104 (FLVASLACADFLVGLTVMPFS). Topologically, residues 105 to 125 (MVRSVEGCWYFGDIYCKFHSS) are extracellular. A helical transmembrane segment spans residues 126–147 (FDGSFCYSSIFHLCFISADRYI). Residues 148–166 (AVSDPLIYPTRFTASVSGK) are Cytoplasmic-facing. The chain crosses the membrane as a helical span at residues 167–187 (CITFSWLLSIIYSFSLFYTGV). Residues 188-211 (NEAGLEDLVSALTCVGGCQIAVNQ) lie on the Extracellular side of the membrane. A glycan (N-linked (GlcNAc...) asparagine) is linked at asparagine 210. The helical transmembrane segment at 212–232 (SWVFINFLLFLVPALVMMTVY) threads the bilayer. Residues 233–274 (SKIFLIAKQQAQNIEKMGKQTARASESYKDRVAKRERKAAKT) lie on the Cytoplasmic side of the membrane. The chain crosses the membrane as a helical span at residues 275–295 (LGIAVAAFLLSWLPYFIDSII). The Extracellular segment spans residues 296–309 (DAFLGFVTPTYVYE). Residues 310–332 (ILVWIGYYNSAMNPLIYAFFYPW) form a helical membrane-spanning segment. Residues 333–358 (FRKAIKLIVTGKILRENSSATNLFPE) lie on the Cytoplasmic side of the membrane.

The protein belongs to the G-protein coupled receptor 1 family.

The protein resides in the cell membrane. Olfactory receptor specific for N,N-dimethylalkylamines trace amines, such as N,N-dimethylcyclohexylamine. Trace amine compounds are enriched in animal body fluids and act on trace amine-associated receptors (TAARs) to elicit both intraspecific and interspecific innate behaviors. Ligand-binding causes a conformation change that triggers signaling via G(s)-class of G alpha proteins (GNAL or GNAS). This is Trace amine-associated receptor 7b from Rattus norvegicus (Rat).